Here is a 628-residue protein sequence, read N- to C-terminus: Propionate--CoA ligase (628 aa).

It belongs to the ATP-dependent AMP-binding enzyme family.

It catalyses the reaction propanoate + ATP + CoA = propanoyl-CoA + AMP + diphosphate. It functions in the pathway organic acid metabolism; propanoate degradation. In terms of biological role, catalyzes the synthesis of propionyl-CoA from propionate and CoA. Also converts acetate to acetyl-CoA but with a lower specific activity. The protein is Propionate--CoA ligase (prpE) of Salmonella typhimurium (strain LT2 / SGSC1412 / ATCC 700720).